We begin with the raw amino-acid sequence, 737 residues long: Relaxin receptor 2 (737 aa).

Residues 1 to 399 lie on the Extracellular side of the membrane; the sequence is MFPLLHFIVL…SSFEDLLANN (399 aa). An LDL-receptor class A domain is found at 27 to 64; that stretch reads LCQKGYFPCGNLTKCLPRAFHCDGVDDCGNGADEDNCG. Cystine bridges form between Cys28–Cys41, Cys35–Cys54, and Cys48–Cys63. Residue Asn37 is glycosylated (N-linked (GlcNAc...) asparagine). The N-linked (GlcNAc...) asparagine glycan is linked to Asn121. LRR repeat units lie at residues 121–142, 145–166, 169–190, 193–214, 217–238, 241–262, 265–286, 289–310, 313–334, and 337–358; these read NTTL…VFTK, QLKQ…AFFG, NLQI…VFKD, QLTW…LFTG, SLFF…MCAQ, QLNW…SFLS, SLTV…TFSS, NLGE…IFKD, LLQK…QFES, and QLQS…MFQP. Residue Asn257 is glycosylated (N-linked (GlcNAc...) asparagine). N-linked (GlcNAc...) asparagine glycosylation occurs at Asn318. The N-linked (GlcNAc...) asparagine glycan is linked to Asn361. The helical transmembrane segment at 400-420 threads the bilayer; the sequence is ILRIFVWVIAFITCFGNLFVI. Over 421 to 438 the chain is Cytoplasmic; sequence GMRSFIKAENTTHATSIK. Residues 439-459 traverse the membrane as a helical segment; that stretch reads ILCCADCLMGVYLFFIGFFDI. Over 460–478 the chain is Extracellular; that stretch reads KYRGQYQKYALLWMESLQC. Cysteines 478 and 556 form a disulfide. Residues 479–501 form a helical membrane-spanning segment; sequence RLMGFLAMLSTEVSVLLLTYLTL. Residues 502–520 are Cytoplasmic-facing; the sequence is EKFLAIVFPFSNIRPGKWQ. The helical transmembrane segment at 521-541 threads the bilayer; that stretch reads TMVILICIWIVGFLIAVIPFW. At 542 to 575 the chain is on the extracellular side; sequence KEDYFGNFYGKNGVCFPLYYDQTEDIGSKGYSLG. A helical membrane pass occupies residues 576–596; sequence IFLGVNLLAFLIIVFSYTIMF. Residues 597–622 are Cytoplasmic-facing; it reads CSIKKTALQTSEVRNPIGREVAVANR. A helical transmembrane segment spans residues 623–643; the sequence is FFFIVFSDAICWIPVFVIKIL. The Extracellular portion of the chain corresponds to 644-653; that stretch reads SLFRVEIPGT. The chain crosses the membrane as a helical span at residues 654–674; the sequence is ITSWIVIFFLPVNSALNPILY. Residues 675–737 are Cytoplasmic-facing; it reads TLTTSFFKDK…LGDSIVKPIS (63 aa).

This sequence belongs to the G-protein coupled receptor 1 family.

It localises to the cell membrane. Receptor for relaxin. The activity of this receptor is mediated by G proteins leading to stimulation of adenylate cyclase and an increase of cAMP. May also be a receptor for Leydig insulin-like peptide (INSL3). In Canis lupus familiaris (Dog), this protein is Relaxin receptor 2 (RXFP2).